Consider the following 142-residue polypeptide: ATP synthase epsilon chain (142 aa).

It belongs to the ATPase epsilon chain family. As to quaternary structure, F-type ATPases have 2 components, CF(1) - the catalytic core - and CF(0) - the membrane proton channel. CF(1) has five subunits: alpha(3), beta(3), gamma(1), delta(1), epsilon(1). CF(0) has three main subunits: a, b and c.

The protein localises to the cell inner membrane. Functionally, produces ATP from ADP in the presence of a proton gradient across the membrane. In Shewanella piezotolerans (strain WP3 / JCM 13877), this protein is ATP synthase epsilon chain.